Here is a 598-residue protein sequence, read N- to C-terminus: Probable translation initiation factor IF-2 (598 aa).

Residues 3-225 (LRCPIVSVLG…GLAQKFLEQK (223 aa)) form the tr-type G domain. Residues 12 to 19 (GHVDHGKT) are G1. 12–19 (GHVDHGKT) is a binding site for GTP. The G2 stretch occupies residues 37–41 (GITQH). The interval 76-79 (DTPG) is G3. Residues 76–80 (DTPGH) and 130–133 (NKVD) each bind GTP. The interval 130–133 (NKVD) is G4. Positions 200-202 (SAM) are G5.

The protein belongs to the TRAFAC class translation factor GTPase superfamily. Classic translation factor GTPase family. IF-2 subfamily.

In terms of biological role, function in general translation initiation by promoting the binding of the formylmethionine-tRNA to ribosomes. Seems to function along with eIF-2. The polypeptide is Probable translation initiation factor IF-2 (Methanococcus maripaludis (strain C7 / ATCC BAA-1331)).